The chain runs to 477 residues: tRNA-2-methylthio-N(6)-dimethylallyladenosine synthase (477 aa).

The region spanning 3-120 (KKLFIKTWGC…LPEMINQIKG (118 aa)) is the MTTase N-terminal domain. Residues cysteine 12, cysteine 49, cysteine 83, cysteine 157, cysteine 161, and cysteine 164 each coordinate [4Fe-4S] cluster. One can recognise a Radical SAM core domain in the interval 143–375 (KAEGPTAFVS…QNRITQQALR (233 aa)). A TRAM domain is found at 378–441 (RNMIDSEQRV…ANSLRGDVLR (64 aa)).

The protein belongs to the methylthiotransferase family. MiaB subfamily. Monomer. [4Fe-4S] cluster is required as a cofactor.

The protein resides in the cytoplasm. The enzyme catalyses N(6)-dimethylallyladenosine(37) in tRNA + (sulfur carrier)-SH + AH2 + 2 S-adenosyl-L-methionine = 2-methylsulfanyl-N(6)-dimethylallyladenosine(37) in tRNA + (sulfur carrier)-H + 5'-deoxyadenosine + L-methionine + A + S-adenosyl-L-homocysteine + 2 H(+). Catalyzes the methylthiolation of N6-(dimethylallyl)adenosine (i(6)A), leading to the formation of 2-methylthio-N6-(dimethylallyl)adenosine (ms(2)i(6)A) at position 37 in tRNAs that read codons beginning with uridine. The protein is tRNA-2-methylthio-N(6)-dimethylallyladenosine synthase of Pseudoalteromonas atlantica (strain T6c / ATCC BAA-1087).